The sequence spans 574 residues: Regulatory protein NPR4 (574 aa).

Residues Met1–Asn21 are disordered. Residues Ser9 to Ser20 are compositionally biased toward low complexity. The residue at position 11 (Ser11) is a Phosphoserine. One can recognise a BTB domain in the interval Thr54–Pro130. The C2HC NPR-type zinc finger occupies Val133–Lys147. Residues Cys136, Cys141, His143, and Cys146 each coordinate Zn(2+). 3 ANK repeats span residues Glu252–Leu280, Asp281–Phe311, and Arg315–Asp344. Residues Glu373 to Pro516 are salicylic acid-binding core (SBC). Arg419 contacts salicylate. The disordered stretch occupies residues Pro521–Thr574. Positions Arg535–Ala553 are enriched in basic and acidic residues. Residues Arg554–Arg567 show a composition bias toward low complexity.

This sequence belongs to the plant 'ANKYRIN-BTB/POZ' family. 'NPR1-like' subfamily. Forms homodimers, homotetramers and heterodimers with NPR3 in the presence of salicylic acid (SA). Interacts with TGA2, TGA3, TGA5, TGA6 and TGA7. Interacts with CUL3A, a core component of the cullin-RING ubiquitin ligases (CRL). Binds to NPR1; this interaction is disrupted by association with SA, probably due to conformational changes.

Its subcellular location is the nucleus. It participates in protein modification; protein ubiquitination. Its function is as follows. Salicylic acid (SA)-binding substrate-specific adapter of an E3 ubiquitin-protein ligase complex (CUL3-RBX1-BTB) which mediates the ubiquitination and subsequent proteasomal degradation of NPR1 in the absence of SA. Together with NPR3, acts as receptor of salicylic acid to monitor immunity in a NPR1-dependent manner and induce systemic acquired resistance (SAR). Involved in the regulation of basal defense responses against pathogens, and may be implicated in the cross-talk between the SA- and JA-dependent signaling pathways. In Arabidopsis thaliana (Mouse-ear cress), this protein is Regulatory protein NPR4.